The chain runs to 43 residues: MLHPHQWTLSLHQLPRLSRPRQSHLPAQTPQPRLSYPKTRRQI.

The tract at residues 13-43 is disordered; that stretch reads QLPRLSRPRQSHLPAQTPQPRLSYPKTRRQI.

This is an uncharacterized protein from Clover yellow mosaic virus (CYMV).